We begin with the raw amino-acid sequence, 141 residues long: Nucleoside diphosphate kinase (141 aa).

ATP contacts are provided by lysine 9, phenylalanine 57, arginine 85, threonine 91, arginine 102, and asparagine 112. Histidine 115 (pros-phosphohistidine intermediate) is an active-site residue.

This sequence belongs to the NDK family. In terms of assembly, homotetramer. Mg(2+) serves as cofactor.

It localises to the cytoplasm. The enzyme catalyses a 2'-deoxyribonucleoside 5'-diphosphate + ATP = a 2'-deoxyribonucleoside 5'-triphosphate + ADP. It catalyses the reaction a ribonucleoside 5'-diphosphate + ATP = a ribonucleoside 5'-triphosphate + ADP. Its function is as follows. Major role in the synthesis of nucleoside triphosphates other than ATP. The ATP gamma phosphate is transferred to the NDP beta phosphate via a ping-pong mechanism, using a phosphorylated active-site intermediate. This Chlamydia felis (strain Fe/C-56) (Chlamydophila felis) protein is Nucleoside diphosphate kinase.